We begin with the raw amino-acid sequence, 380 residues long: Probable inactive dehydrogenase easA (380 aa).

Residues 25–27 (PMT), A60, Q102, and H171 contribute to the FMN site. The substrate site is built by H171 and N174. Residues K223, G299, 324–325 (GR), and R325 each bind FMN. Y352 is a binding site for substrate.

It belongs to the NADH:flavin oxidoreductase/NADH oxidase family.

Probable inactive dehydrogenase; part of the gene cluster that mediates the biosynthesis of fungal ergot alkaloid. DmaW catalyzes the first step of ergot alkaloid biosynthesis by condensing dimethylallyl diphosphate (DMAP) and tryptophan to form 4-dimethylallyl-L-tryptophan. The second step is catalyzed by the methyltransferase easF that methylates 4-dimethylallyl-L-tryptophan in the presence of S-adenosyl-L-methionine, resulting in the formation of 4-dimethylallyl-L-abrine. The catalase easC and the FAD-dependent oxidoreductase easE then transform 4-dimethylallyl-L-abrine to chanoclavine-I which is further oxidized by easD in the presence of NAD(+), resulting in the formation of chanoclavine-I aldehyde. Agroclavine dehydrogenase easG then mediates the conversion of chanoclavine-I aldehyde to agroclavine via a non-enzymatic adduct reaction: the substrate is an iminium intermediate that is formed spontaneously from chanoclavine-I aldehyde in the presence of glutathione. The presence of easA is not required to complete this reaction. Further conversion of agroclavine to paspalic acid is a two-step process involving oxidation of agroclavine to elymoclavine and of elymoclavine to paspalic acid, the second step being performed by the elymoclavine oxidase cloA. Paspalic acid is then further converted to D-lysergic acid. Ergopeptines are assembled from D-lysergic acid and three different amino acids by the D-lysergyl-peptide-synthetases composed each of a monomudular and a trimodular nonribosomal peptide synthetase subunit. LpsB and lpsC encode the monomodular subunits responsible for D-lysergic acid activation and incorporation into the ergopeptine backbone. LpsA1 and A2 subunits encode the trimodular nonribosomal peptide synthetase assembling the tripeptide portion of ergopeptines. LpsA1 is responsible for formation of the major ergopeptine, ergotamine, and lpsA2 for alpha-ergocryptine, the minor ergopeptine of the total alkaloid mixture elaborated by C.purpurea. D-lysergyl-tripeptides are assembled by the nonribosomal peptide synthetases and released as N-(D-lysergyl-aminoacyl)-lactams. Cyclolization of the D-lysergyl-tripeptides is performed by the Fe(2+)/2-ketoglutarate-dependent dioxygenase easH which introduces a hydroxyl group into N-(D-lysergyl-aminoacyl)-lactam at alpha-C of the aminoacyl residue followed by spontaneous condensation with the terminal lactam carbonyl group. The protein is Probable inactive dehydrogenase easA of Claviceps purpurea (Ergot fungus).